The chain runs to 1576 residues: Protein Shroom (1576 aa).

Disordered stretches follow at residues 1 to 31 (MKMR…ENNN), 46 to 100 (SNGA…TQAG), 112 to 142 (YDQT…DSTS), 187 to 244 (RQSH…SSTE), 267 to 434 (ISES…ISVT), 589 to 609 (VERQ…HSQS), and 621 to 660 (PNNL…SLLP). The segment covering 10–21 (GNGSEMGESTKS) has biased composition (polar residues). Composition is skewed to low complexity over residues 46–69 (SNGA…AGSV), 76–91 (HNSS…GSSL), and 128–142 (SEGY…DSTS). Residues 189–211 (SHSHSHSHAHSHSNSHGHSHGHA) are compositionally biased toward basic residues. Low complexity-rich tracts occupy residues 212-244 (HSAS…SSTE) and 267-283 (ISES…SSRV). Polar residues predominate over residues 305 to 317 (DSSPTASNSSQMM). Over residues 376-388 (QSTLSTQSSLLEL) the composition is skewed to low complexity. Residues 399-415 (MGQSHSMGDLQQKNPHQ) are compositionally biased toward polar residues. Ser-404 carries the phosphoserine modification. Residues 445–920 (APQPPAGKPS…LESNQQKRSN (476 aa)) form an F-actin binding region required for planar polarity and cortical localization region. Polar residues predominate over residues 633-643 (TGSNSASTRDC). 2 positions are modified to phosphoserine: Ser-667 and Ser-668. 7 disordered regions span residues 699–728 (ISFN…SSAT), 743–823 (AALA…NCFA), 849–876 (VPKK…HHAT), 910–939 (NLES…NTDP), 1036–1055 (GYGK…SQSY), 1091–1116 (PTAT…SHSD), and 1210–1244 (SFAN…DVHD). Positions 748–759 (QQHHPQQHRHAQ) are enriched in basic residues. The span at 798 to 816 (PLPPPPPPEVLQPRPPPSP) shows a compositional bias: pro residues. 2 stretches are compositionally biased toward polar residues: residues 910-923 (NLES…NSKA) and 1042-1055 (KPVT…SQSY). Pro residues-rich tracts occupy residues 1094–1108 (TPTP…PPRL) and 1217–1229 (MTPP…PPPL). A compositionally biased stretch (acidic residues) spans 1230–1239 (EPEEEEEQEE). A coiled-coil region spans residues 1232 to 1296 (EEEEEQEEND…LEAAREEHQT (65 aa)). An ASD2 domain is found at 1305 to 1572 (RQPIELDYEQ…QLSSLSDALV (268 aa)).

The protein belongs to the shroom family. In terms of assembly, monomer or homodimer. Interacts with Rok. As to quaternary structure, binds (via N-terminus) to F-actin.

Its subcellular location is the cell junction. It is found in the adherens junction. It localises to the cytoplasm. The protein resides in the cytoskeleton. The protein localises to the apical cell membrane. Its function is as follows. Binds to Rho-kinase Rok and targets it to the apical cell cortex where it mediates apical constriction. During embryogenic axis elongation, required for the localization to adherens junctions and the establishment of planar polarization of both Rho-kinase Rok and myosin regulatory light chain sqh. May be involved in the assembly of microtubule arrays during cell elongation. This Drosophila melanogaster (Fruit fly) protein is Protein Shroom.